Reading from the N-terminus, the 309-residue chain is 11-beta-hydroxysteroid dehydrogenase-like 3 (309 aa).

A helical; Signal-anchor for type II membrane protein membrane pass occupies residues 10–30 (LLLPPLTIIFLFLFYPFYLLI). NADP(+)-binding positions include 54-80 (GASS…VARR) and Asp105. Residue Ser184 participates in substrate binding. The active-site Proton acceptor is the Tyr197. Residues 197 to 201 (YAASK) and Lys201 each bind NADP(+).

This sequence belongs to the short-chain dehydrogenases/reductases (SDR) family.

The protein resides in the membrane. The protein is 11-beta-hydroxysteroid dehydrogenase-like 3 (HSD3) of Arabidopsis thaliana (Mouse-ear cress).